A 396-amino-acid polypeptide reads, in one-letter code: Phosphoglycerate kinase (396 aa).

Residues 21 to 23, Arg36, 59 to 62, Arg118, and Arg151 each bind substrate; these read DLN and HFGR. Residues Lys201, Glu323, and 353–356 contribute to the ATP site; that span reads GGDT.

This sequence belongs to the phosphoglycerate kinase family. Monomer.

It localises to the cytoplasm. It carries out the reaction (2R)-3-phosphoglycerate + ATP = (2R)-3-phospho-glyceroyl phosphate + ADP. It participates in carbohydrate degradation; glycolysis; pyruvate from D-glyceraldehyde 3-phosphate: step 2/5. In Rhodospirillum centenum (strain ATCC 51521 / SW), this protein is Phosphoglycerate kinase.